Reading from the N-terminus, the 478-residue chain is Putative indole-3-acetic acid-amido synthetase GH3.10 (478 aa).

The protein belongs to the IAA-amido conjugating enzyme family.

Its function is as follows. May catalyze the synthesis of indole-3-acetic acid (IAA)-amino acid conjugates, providing a mechanism for the plant to cope with the presence of excess auxin. In Oryza sativa subsp. japonica (Rice), this protein is Putative indole-3-acetic acid-amido synthetase GH3.10 (GH3.10).